A 546-amino-acid chain; its full sequence is Pectinesterase 1 (546 aa).

A signal peptide spans 1–39 (MANPQQPLLIKTHKQNPIISFKILSFVITLFVALFLVAP). Positions 40-229 (YQVEIKHSNL…RKLMESSGKD (190 aa)) are excised as a propeptide. Substrate contacts are provided by threonine 308 and glutamine 338. The cysteines at positions 327 and 354 are disulfide-linked. Aspartate 361 functions as the Proton donor in the catalytic mechanism. Catalysis depends on aspartate 382, which acts as the Nucleophile. An intrachain disulfide couples cysteine 395 to cysteine 429. Residues arginine 450 and tryptophan 452 each coordinate substrate.

This sequence in the N-terminal section; belongs to the PMEI family. In the C-terminal section; belongs to the pectinesterase family.

Its subcellular location is the secreted. It localises to the cell wall. It catalyses the reaction [(1-&gt;4)-alpha-D-galacturonosyl methyl ester](n) + n H2O = [(1-&gt;4)-alpha-D-galacturonosyl](n) + n methanol + n H(+). The protein operates within glycan metabolism; pectin degradation; 2-dehydro-3-deoxy-D-gluconate from pectin: step 1/5. In terms of biological role, pectinesterase may play a role in cell wall metabolism during fruit growth and development prior to ripening and may be required for preparing cell walls for softening by polygalacturonase during fruit ripening. The polypeptide is Pectinesterase 1 (PME1.9) (Solanum lycopersicum (Tomato)).